The chain runs to 474 residues: Adenosylhomocysteinase (474 aa).

Substrate is bound by residues threonine 61, aspartate 136, and glutamate 196. 197-199 (TTT) contributes to the NAD(+) binding site. Residues lysine 226 and aspartate 230 each coordinate substrate. NAD(+) contacts are provided by residues asparagine 231, 260-265 (GYGDVG), glutamate 283, asparagine 318, 339-341 (IGH), and asparagine 384.

The protein belongs to the adenosylhomocysteinase family. Requires NAD(+) as cofactor.

It is found in the cytoplasm. It catalyses the reaction S-adenosyl-L-homocysteine + H2O = L-homocysteine + adenosine. It functions in the pathway amino-acid biosynthesis; L-homocysteine biosynthesis; L-homocysteine from S-adenosyl-L-homocysteine: step 1/1. Functionally, may play a key role in the regulation of the intracellular concentration of adenosylhomocysteine. The sequence is that of Adenosylhomocysteinase from Ralstonia nicotianae (strain ATCC BAA-1114 / GMI1000) (Ralstonia solanacearum).